A 573-amino-acid chain; its full sequence is Phosphomethylpyrimidine synthase (573 aa).

Substrate-binding positions include Asn190, Met219, Tyr248, His284, 304 to 306 (SRG), 345 to 348 (DGLR), and Glu384. His388 serves as a coordination point for Zn(2+). Tyr411 contacts substrate. His452 is a Zn(2+) binding site. [4Fe-4S] cluster contacts are provided by Cys532, Cys535, and Cys540.

The protein belongs to the ThiC family. [4Fe-4S] cluster serves as cofactor.

The catalysed reaction is 5-amino-1-(5-phospho-beta-D-ribosyl)imidazole + S-adenosyl-L-methionine = 4-amino-2-methyl-5-(phosphooxymethyl)pyrimidine + CO + 5'-deoxyadenosine + formate + L-methionine + 3 H(+). The protein operates within cofactor biosynthesis; thiamine diphosphate biosynthesis. Functionally, catalyzes the synthesis of the hydroxymethylpyrimidine phosphate (HMP-P) moiety of thiamine from aminoimidazole ribotide (AIR) in a radical S-adenosyl-L-methionine (SAM)-dependent reaction. This Geobacillus sp. (strain WCH70) protein is Phosphomethylpyrimidine synthase.